Here is a 117-residue protein sequence, read N- to C-terminus: Immunoglobulin kappa variable 1-12 (117 aa).

Positions 1–22 (MDMRVPAQLLGLLLLWFPGSRC) are cleaved as a signal peptide. Residues 23 to 45 (DIQMTQSPSSVSASVGDRVTITC) are framework-1. The region spanning 24 to 117 (IQMTQSPSSV…YYCQQANSFP (94 aa)) is the Ig-like domain. A disulfide bridge connects residues Cys45 and Cys110. Positions 46–56 (RASQGISSWLA) are complementarity-determining-1. The segment at 57-71 (WYQQKPGKAPKLLIY) is framework-2. Residues 72–78 (AASSLQS) form a complementarity-determining-2 region. The segment at 79–110 (GVPSRFSGSGSGTDFTLTISSLQPEDFATYYC) is framework-3. The segment at 111-117 (QQANSFP) is complementarity-determining-3.

In terms of assembly, immunoglobulins are composed of two identical heavy chains and two identical light chains; disulfide-linked.

It is found in the secreted. It localises to the cell membrane. Functionally, v region of the variable domain of immunoglobulin light chains that participates in the antigen recognition. Immunoglobulins, also known as antibodies, are membrane-bound or secreted glycoproteins produced by B lymphocytes. In the recognition phase of humoral immunity, the membrane-bound immunoglobulins serve as receptors which, upon binding of a specific antigen, trigger the clonal expansion and differentiation of B lymphocytes into immunoglobulins-secreting plasma cells. Secreted immunoglobulins mediate the effector phase of humoral immunity, which results in the elimination of bound antigens. The antigen binding site is formed by the variable domain of one heavy chain, together with that of its associated light chain. Thus, each immunoglobulin has two antigen binding sites with remarkable affinity for a particular antigen. The variable domains are assembled by a process called V-(D)-J rearrangement and can then be subjected to somatic hypermutations which, after exposure to antigen and selection, allow affinity maturation for a particular antigen. This is Immunoglobulin kappa variable 1-12 from Homo sapiens (Human).